The following is a 286-amino-acid chain: Co-chaperone protein DjlA (286 aa).

Over methionine 1 to lysine 6 the chain is Periplasmic. A helical membrane pass occupies residues isoleucine 7–histidine 31. Residues leucine 32 to lysine 286 lie on the Cytoplasmic side of the membrane. The J domain occupies aspartate 220–lysine 286.

In terms of assembly, homodimer.

The protein resides in the cell inner membrane. Its function is as follows. Regulatory DnaK co-chaperone. Direct interaction between DnaK and DjlA is needed for the induction of the wcaABCDE operon, involved in the synthesis of a colanic acid polysaccharide capsule, possibly through activation of the RcsB/RcsC phosphotransfer signaling pathway. The colanic acid capsule may help the bacterium survive conditions outside the host. This chain is Co-chaperone protein DjlA, found in Haemophilus ducreyi (strain 35000HP / ATCC 700724).